Here is a 166-residue protein sequence, read N- to C-terminus: Regulator of ribonuclease activity A (166 aa).

Belongs to the RraA family. Homotrimer. Binds to both RNA-binding sites in the C-terminal region of Rne and to RhlB.

The protein resides in the cytoplasm. Its function is as follows. Globally modulates RNA abundance by binding to RNase E (Rne) and regulating its endonucleolytic activity. Can modulate Rne action in a substrate-dependent manner by altering the composition of the degradosome. Modulates RNA-binding and helicase activities of the degradosome. This is Regulator of ribonuclease activity A from Glaesserella parasuis serovar 5 (strain SH0165) (Haemophilus parasuis).